The following is a 1427-amino-acid chain: DNA-directed RNA polymerase subunit beta' (1427 aa).

Positions 70, 72, 85, and 88 each coordinate Zn(2+). Positions 461, 463, and 465 each coordinate Mg(2+). Positions 838, 912, 919, and 922 each coordinate Zn(2+).

Belongs to the RNA polymerase beta' chain family. As to quaternary structure, the RNAP catalytic core consists of 2 alpha, 1 beta, 1 beta' and 1 omega subunit. When a sigma factor is associated with the core the holoenzyme is formed, which can initiate transcription. Mg(2+) serves as cofactor. Requires Zn(2+) as cofactor.

The enzyme catalyses RNA(n) + a ribonucleoside 5'-triphosphate = RNA(n+1) + diphosphate. Functionally, DNA-dependent RNA polymerase catalyzes the transcription of DNA into RNA using the four ribonucleoside triphosphates as substrates. This chain is DNA-directed RNA polymerase subunit beta', found in Sorangium cellulosum (strain So ce56) (Polyangium cellulosum (strain So ce56)).